Reading from the N-terminus, the 149-residue chain is Large ribosomal subunit protein uL15 (149 aa).

Over residues 1–12 (MSEPIKLHDLRP) the composition is skewed to basic and acidic residues. The segment at 1–55 (MSEPIKLHDLRPAKGANKPKTRVGRGEASKGKTAGRGTKGTKARKQVSAAFEGGQ) is disordered.

This sequence belongs to the universal ribosomal protein uL15 family. Part of the 50S ribosomal subunit.

Its function is as follows. Binds to the 23S rRNA. This Corynebacterium kroppenstedtii (strain DSM 44385 / JCM 11950 / CIP 105744 / CCUG 35717) protein is Large ribosomal subunit protein uL15.